The primary structure comprises 265 residues: MAATAAAALAVTDELALPLRAVGDLAAAAGVSREEVVVITQCASLGGKLPFADASVGSVLAVIKKVENLGNQFITEISRVLKAGGMVLVQSSPSDQDPNNSIERKLLLGGFVDVQASAASSQDNEHSVNIKAKKASWSMGSSFPLKKATKGLPKIQIDDDSELIDEDSLLTEDDLKKPELPVVGDCEVGATRKACKNCTCGRAEAEEKVEKLNLTSEQINNPQSACGNCGLGDAFRCGTCPYRGLPAFKPGEKIALPGNFLAADM.

The tract at residues 1-143 (MAATAAAALA…KASWSMGSSF (143 aa)) is N-terminal SAM-like domain. The tract at residues 144–175 (PLKKATKGLPKIQIDDDSELIDEDSLLTEDDL) is linker. [2Fe-2S] cluster contacts are provided by C186, C195, C198, and C200. Residues 186–200 (CEVGATRKACKNCTC) form a fe-S binding site A region. The [4Fe-4S] cluster site is built by C226, C229, C237, and C240. 2 consecutive short sequence motifs (cx2C motif) follow at residues 226–229 (CGNC) and 237–240 (CGTC). Positions 226-240 (CGNCGLGDAFRCGTC) are fe-S binding site B.

This sequence belongs to the anamorsin family. Monomer. [2Fe-2S] cluster is required as a cofactor. [4Fe-4S] cluster serves as cofactor.

It is found in the cytoplasm. It localises to the mitochondrion intermembrane space. In terms of biological role, component of the cytosolic iron-sulfur (Fe-S) protein assembly (CIA) machinery. Required for the maturation of extramitochondrial Fe-S proteins. Part of an electron transfer chain functioning in an early step of cytosolic Fe-S biogenesis, facilitating the de novo assembly of a [4Fe-4S] cluster on the cytosolic Fe-S scaffold complex. Electrons are transferred from NADPH via a FAD- and FMN-containing diflavin oxidoreductase. Together with the diflavin oxidoreductase, also required for the assembly of the diferric tyrosyl radical cofactor of ribonucleotide reductase (RNR), probably by providing electrons for reduction during radical cofactor maturation in the catalytic small subunit. In Oryza sativa subsp. indica (Rice), this protein is Anamorsin homolog 1.